Reading from the N-terminus, the 382-residue chain is Acetyltransferase eriL (382 aa).

A run of 6 helical transmembrane segments spans residues 5 to 25 (LQPL…LGAV), 33 to 53 (ALLF…TTTG), 59 to 79 (IVTW…LLIN), 146 to 166 (TLFY…SPVF), 192 to 212 (LWSY…ALGV), and 335 to 355 (GYMW…DPQF).

This sequence belongs to the wax synthase family.

The protein localises to the membrane. The enzyme catalyses cyathatriol + acetyl-CoA = 11-O-acetylcyathatriol + CoA. It carries out the reaction cyathin A3 + acetyl-CoA = 11-O-acetylcyathin A3 + CoA. Its pathway is secondary metabolite biosynthesis. In terms of biological role, acetyltransferase; part of the gene cluster that mediates the biosynthesis of erinacines, cyathane-xylosides that show unique biological activities, including leishmanicidal activity, stimulating activity for nerve growth-factor synthesis, and agonistic activity toward the kappa opioid receptor. Within the pathway, eriL converts cyathatriol into 11-O-acetyl-cyathatriol. EriL is also able to acetylate cyathin A3 to produce 11-O-acetylcyathin A3. The first step of the erinacines biosynthesis pathway is catalyzed by the geranylgeranyl diphosphate (GGPP) synthase eriE via conversion of farnesyl pyrophosphate and isopentyl pyrophosphate into geranylgeranyl pyrophosphate (GGPP). GGPP is then substrate of the diterpene cyclase eriG for the production of cyatha-3,12-diene. The cytochrome P450 monooxygenase eriI then hydroxylates cyatha-3,12-diene at C-14 of the seven-membered ring to produce erinacol, which is further hydroxylated at C-15 by the cytochrome P450 monooxygenase eriC to yield cyathadiol. The cytochrome P450 monooxygenase eriA then catalyzes C-11 hydroxylation in the presence of the short chain dehydrogenase/reductase (SDR) eriH, which leads to the production of cyathatriol. The acetyltransferase eriL converts cyathatriol into 11-O-acetyl-cyathatriol. The SDR eriH catalyzes further oxidation of 11-O-acetyl-cyathatriol into 1-O-acetylcyathin A3. Finally, the glycosyl transferase eriJ tranfers xylose from UDP-xylose onto C-14 of 11-O-acetyl-cyathatriol to form eracine Q. EriJ is also able to convert 11-O-acetyl-cyathatriol to eracine Q2 by using UDP-D-glucose as cosubstrate, but at a lower rate. This is Acetyltransferase eriL from Hericium erinaceus (Lion's mane mushroom).